Here is a 230-residue protein sequence, read N- to C-terminus: MYDITKWKHMFKLDPAKSISDENLEALCMSNTDAIIIGGTDDVTEDNVIHLMSRVRRYPLPLVLEVSNVESVMPGFDFYFIPTVMNSKDTKYHNEILLEALKKYGHVINFDEVFFEGYVVLNANSKVAKITKAYTQLGIEDVEAYAQMAEELYRFPIMYVEYSGTYGDVDKVKAIANMLQHTQLFYGGGITNIDKANEMSNIADTIVVGDIIYNDIKKALKTVKIKESNK.

Lys12 lines the sn-glycerol 1-phosphate pocket. 2 residues coordinate Mg(2+): Asp14 and Thr40. Sn-glycerol 1-phosphate-binding positions include 159–164 (YVEYSG), Gly189, and 209–210 (GD).

This sequence belongs to the GGGP/HepGP synthase family. Group I subfamily. In terms of assembly, homodimer. Mg(2+) is required as a cofactor.

It carries out the reaction sn-glycerol 1-phosphate + all-trans-heptaprenyl diphosphate = 3-heptaprenyl-sn-glycero-1-phosphate + diphosphate. Its pathway is membrane lipid metabolism; glycerophospholipid metabolism. Prenyltransferase that catalyzes in vivo the transfer of the heptaprenyl moiety of heptaprenyl pyrophosphate (HepPP; 35 carbon atoms) to the C3 hydroxyl of sn-glycerol-1-phosphate (G1P), producing heptaprenylglyceryl phosphate (HepGP). This reaction is an ether-bond-formation step in the biosynthesis of archaea-type G1P-based membrane lipids found in Bacillales. In Staphylococcus epidermidis (strain ATCC 35984 / DSM 28319 / BCRC 17069 / CCUG 31568 / BM 3577 / RP62A), this protein is Heptaprenylglyceryl phosphate synthase.